The sequence spans 594 residues: NADH-quinone oxidoreductase subunit C/D (594 aa).

The tract at residues 1-185 (MTTGSALYIP…DPFSLNLAKQ (185 aa)) is NADH dehydrogenase I subunit C. The tract at residues 209-594 (DYMFLNLGPN…IDFVMADVDR (386 aa)) is NADH dehydrogenase I subunit D.

The protein in the N-terminal section; belongs to the complex I 30 kDa subunit family. In the C-terminal section; belongs to the complex I 49 kDa subunit family. In terms of assembly, NDH-1 is composed of 13 different subunits. Subunits NuoB, CD, E, F, and G constitute the peripheral sector of the complex.

It is found in the cell inner membrane. It catalyses the reaction a quinone + NADH + 5 H(+)(in) = a quinol + NAD(+) + 4 H(+)(out). Its function is as follows. NDH-1 shuttles electrons from NADH, via FMN and iron-sulfur (Fe-S) centers, to quinones in the respiratory chain. The immediate electron acceptor for the enzyme in this species is believed to be ubiquinone. Couples the redox reaction to proton translocation (for every two electrons transferred, four hydrogen ions are translocated across the cytoplasmic membrane), and thus conserves the redox energy in a proton gradient. This is NADH-quinone oxidoreductase subunit C/D from Pseudomonas fluorescens (strain SBW25).